The following is a 277-amino-acid chain: MGIRRYKPTTPGRRGASVADFVEITRDHPEKSLVRPLHSKGGRNVHGRITTRHQGGGHKRAYRVIDFRRDKDGVPAKVAHIEYDPNRTARIALLHYLDGEKRYILAPVKLRQGDTVSSGVGADIKPGNALPLRNIPTGTVVHAIELRPGGGAKIARSAGTSVQLVAKDGPYAQLRMPSGEIRNVDVRCRATVGEVGNAEQSNINWGKAGRMRWKGRRPTVRGVAMNPVDHPHGGGEGKTSGGRHPVNPKGRPEGRTRATRKSSDALIVRRRKQNRRR.

Disordered stretches follow at residues 35 to 57 and 222 to 277; these read RPLH…QGGG and GVAM…NRRR. 2 stretches are compositionally biased toward basic residues: residues 37–57 and 268–277; these read LHSK…QGGG and VRRRKQNRRR.

Belongs to the universal ribosomal protein uL2 family. As to quaternary structure, part of the 50S ribosomal subunit. Forms a bridge to the 30S subunit in the 70S ribosome.

Functionally, one of the primary rRNA binding proteins. Required for association of the 30S and 50S subunits to form the 70S ribosome, for tRNA binding and peptide bond formation. It has been suggested to have peptidyltransferase activity; this is somewhat controversial. Makes several contacts with the 16S rRNA in the 70S ribosome. The polypeptide is Large ribosomal subunit protein uL2 (Frankia casuarinae (strain DSM 45818 / CECT 9043 / HFP020203 / CcI3)).